The chain runs to 303 residues: Taste receptor type 2 member 13 (303 aa).

The Extracellular portion of the chain corresponds to 1–7 (MESALPS). Residues 8–28 (IFTLVIIAEFIIGNLSNGFIV) traverse the membrane as a helical segment. Residues 29–55 (LINCIDWVSKRELSSVDKLLIILAISR) are Cytoplasmic-facing. Residues 56-76 (IGLIWEILVSWFLALHSLAIF) form a helical membrane-spanning segment. The Extracellular portion of the chain corresponds to 77–85 (VSGTGLRIM). A helical transmembrane segment spans residues 86-106 (IFSWIVSNHFNLWLATILSIF). At 107 to 128 (YLLKIASFSSPAFLYLKRRVNK) the chain is on the cytoplasmic side. A helical transmembrane segment spans residues 129–149 (VILMILLGTLVFLFLNLIQIN). Residues 150-184 (MLIKDWLDRYERNTTWNFSMSDFETFSVSVRFTMT) are Extracellular-facing. N-linked (GlcNAc...) asparagine glycosylation is found at Asn162 and Asn166. A helical transmembrane segment spans residues 185–205 (MFSLTPFTVAFISFLLLVFSL). The Cytoplasmic portion of the chain corresponds to 206-232 (QKHLQKMQLNYKGHRDPRTKVHTNALK). The chain crosses the membrane as a helical span at residues 233 to 253 (IVISFLLLYASFFLSILISWI). Topologically, residues 254 to 261 (SELYQNTV) are extracellular. The chain crosses the membrane as a helical span at residues 262 to 282 (IYMLCETIGAFYPSSHSFLLI). Topologically, residues 283–303 (LGNAKLRQAFLLVAAKVWAKR) are cytoplasmic.

Belongs to the G-protein coupled receptor T2R family.

The protein resides in the membrane. Its function is as follows. Receptor that may play a role in the perception of bitterness and is gustducin-linked. May play a role in sensing the chemical composition of the gastrointestinal content. The activity of this receptor may stimulate alpha gustducin, mediate PLC-beta-2 activation and lead to the gating of TRPM5. This chain is Taste receptor type 2 member 13 (TAS2R13), found in Pan troglodytes (Chimpanzee).